We begin with the raw amino-acid sequence, 612 residues long: Siderophore iron transporter 1 (612 aa).

Phosphoserine is present on residues Ser5, Ser21, Ser22, Ser36, and Ser41. Helical transmembrane passes span 91-111 (ISFY…SFQA), 125-145 (FAGH…SAAI), 159-179 (LEAF…MAAS), 188-208 (GSVL…IFMA), 218-238 (LVLG…PRVA), 249-269 (WGIA…LAVY), 299-319 (IIGL…ISLA), 331-351 (FIVM…YEIF), 365-385 (EPTI…FYCW), 406-426 (YISY…GILI), 434-453 (WYFV…MIRY), 464-484 (IMPQ…LTVA), 495-515 (AIVT…GSAI), and 573-593 (ILTS…WFVA).

This sequence belongs to the major facilitator superfamily.

Its subcellular location is the membrane. Involved in the transport of siderophore iron and so has a role in iron homeostasis. In Schizosaccharomyces pombe (strain 972 / ATCC 24843) (Fission yeast), this protein is Siderophore iron transporter 1 (str1).